A 380-amino-acid polypeptide reads, in one-letter code: Flap endonuclease 1 (380 aa).

The tract at residues 1–104 (MGIQGLAKLI…GELAKRSERR (104 aa)) is N-domain. R19 carries the symmetric dimethylarginine; by PRMT5 modification. D34 lines the Mg(2+) pocket. DNA contacts are provided by R47 and R70. K80 is modified (N6-acetyllysine). D86 contributes to the Mg(2+) binding site. Residues R100 and R104 each carry the symmetric dimethylarginine; by PRMT5 modification. Positions 122 to 253 (EVEKFTKRLV…KRAVDLIQKH (132 aa)) are I-domain. Positions 158, 160, 179, and 181 each coordinate Mg(2+). E158 contacts DNA. S187 carries the post-translational modification Phosphoserine; by CDK2. R192 carries the post-translational modification Symmetric dimethylarginine; by PRMT5. Residue S197 is modified to Phosphoserine. 2 residues coordinate DNA: G231 and D233. D233 contacts Mg(2+). 3 positions are modified to phosphoserine: S255, S293, and S335. Position 336 is a phosphothreonine (T336). Residues 336-344 (TQGRLDDFF) form an interaction with PCNA region. The disordered stretch occupies residues 349–380 (SLSSAKRKEPEPKGAAKKKQRLGPAGKFKRGK). K354, K375, K377, and K380 each carry N6-acetyllysine. The span at 363 to 380 (AAKKKQRLGPAGKFKRGK) shows a compositional bias: basic residues.

It belongs to the XPG/RAD2 endonuclease family. FEN1 subfamily. As to quaternary structure, interacts with PCNA. Three molecules of FEN1 bind to one PCNA trimer with each molecule binding to one PCNA monomer. PCNA stimulates the nuclease activity without altering cleavage specificity. The C-terminal domain binds EP300; can bind simultaneously to both PCNA and EP300. Interacts with DDX11; this interaction is direct and increases flap endonuclease activity of FEN1. Interacts with WDR4; regulating its endonuclease activity. Interacts with POLB. Requires Mg(2+) as cofactor. Post-translationally, acetylated by EP300. Acetylation inhibits both endonuclease and exonuclease activity. Acetylation also reduces DNA-binding activity but does not affect interaction with PCNA or EP300. In terms of processing, phosphorylation upon DNA damage induces relocalization to the nuclear plasma. Phosphorylation at Ser-187 by CDK2 occurs during late S-phase and results in dissociation from PCNA. Methylation at Arg-192 by PRMT5 impedes Ser-187 phosphorylation and increases interaction with PCNA.

The protein resides in the nucleus. Its subcellular location is the nucleolus. It localises to the nucleoplasm. It is found in the mitochondrion. Functionally, structure-specific nuclease with 5'-flap endonuclease and 5'-3' exonuclease activities involved in DNA replication and repair. During DNA replication, cleaves the 5'-overhanging flap structure that is generated by displacement synthesis when DNA polymerase encounters the 5'-end of a downstream Okazaki fragment. It enters the flap from the 5'-end and then tracks to cleave the flap base, leaving a nick for ligation. Also involved in the long patch base excision repair (LP-BER) pathway, by cleaving within the apurinic/apyrimidinic (AP) site-terminated flap. Acts as a genome stabilization factor that prevents flaps from equilibrating into structures that lead to duplications and deletions. Also possesses 5'-3' exonuclease activity on nicked or gapped double-stranded DNA, and exhibits RNase H activity. Also involved in replication and repair of rDNA and in repairing mitochondrial DNA. The protein is Flap endonuclease 1 of Ovis aries (Sheep).